The following is a 711-amino-acid chain: 1,4-alpha-glucan-branching enzyme (711 aa).

(1,4-alpha-D-glucosyl)n contacts are provided by Trp-98 and Lys-135. The Nucleophile role is filled by Asp-353. The active-site Proton donor is the Glu-414.

This sequence belongs to the glycosyl hydrolase 13 family. GlgB subfamily.

It localises to the cytoplasm. The catalysed reaction is Transfers a segment of a (1-&gt;4)-alpha-D-glucan chain to a primary hydroxy group in a similar glucan chain.. It functions in the pathway glycan biosynthesis; glycogen biosynthesis. In terms of biological role, glycogen-branching enzyme participates in the glycogen biosynthetic process along with glycogenin and glycogen synthase. Generates alpha-1,6-glucosidic branches from alpha-1,4-linked glucose chains, to increase solubility of the glycogen polymer. The polypeptide is 1,4-alpha-glucan-branching enzyme (GLC3) (Debaryomyces hansenii (strain ATCC 36239 / CBS 767 / BCRC 21394 / JCM 1990 / NBRC 0083 / IGC 2968) (Yeast)).